Here is a 2647-residue protein sequence, read N- to C-terminus: Filamin-A (2647 aa).

The segment covering 1–15 (MSSSHSRAGQSAAGA) has biased composition (low complexity). A disordered region spans residues 1 to 39 (MSSSHSRAGQSAAGAAPGGGVDTRDAEMPATEKDLAEDA). Ser-2 bears the N-acetylserine mark. Positions 2–274 (SSSHSRAGQS…PKAKLKPGAP (273 aa)) are actin-binding. At Ser-11 the chain carries Phosphoserine. Residues 22–39 (DTRDAEMPATEKDLAEDA) are compositionally biased toward basic and acidic residues. Glycyl lysine isopeptide (Lys-Gly) (interchain with G-Cter in ubiquitin) cross-links involve residues Lys-42, Lys-43, and Lys-135. Calponin-homology (CH) domains are found at residues 43–149 (KIQQ…LHYS) and 166–269 (QTPK…KAKL). The tract at residues 271-294 (PGAPLRPKLNPKKARAYGPGIEPT) is disordered. 15 Filamin repeats span residues 276–374 (RPKL…EVYV), 376–474 (KSQG…TVTV), 475–570 (GQAC…EVKV), 571–663 (GTEC…MADI), 667–763 (PQDF…RVNV), 764–866 (GAGS…RVKV), 867–965 (EPSH…SVAV), 966–1061 (SPSL…PLEA), 1062–1154 (VAPT…KAHV), 1155–1249 (VPCF…KLQV), 1250–1349 (EPAV…QVPV), 1350–1442 (TEGC…KVPV), 1443–1539 (HDVT…KVKV), 1540–1636 (LPTH…RVRA), and 1649–1740 (VSIG…QVTA). Lys-299 is covalently cross-linked (Glycyl lysine isopeptide (Lys-Gly) (interchain with G-Cter in SUMO1); alternate). Residue Lys-299 forms a Glycyl lysine isopeptide (Lys-Gly) (interchain with G-Cter in SUMO2); alternate linkage. An N6-acetyllysine mark is found at Lys-376 and Lys-508. 5 positions are modified to N6-acetyllysine: Lys-700, Lys-781, Lys-837, Lys-865, and Lys-906. A phosphoserine mark is found at Ser-968 and Ser-1055. Residue Lys-1071 is modified to N6-acetyllysine; alternate. An N6-succinyllysine; alternate modification is found at Lys-1071. Phosphoserine occurs at positions 1081 and 1084. Phosphothreonine is present on Thr-1089. Residues Ser-1301 and Ser-1338 each carry the phosphoserine modification. The disordered stretch occupies residues 1361–1382 (HGPGIQSGTTNKPNKFTVETRG). Residue Lys-1372 is modified to N6-acetyllysine. Phosphoserine is present on residues Ser-1459 and Ser-1533. An interaction with furin region spans residues 1490-1607 (PKGLVEPVDV…DNHDGTYTVA (118 aa)). Lys-1538 bears the N6-acetyllysine mark. Ser-1630 and Ser-1734 each carry phosphoserine. Positions 1741–1778 (LAGDQPSVQPPLRSQQLAPQYTYAQGGQQTWAPERPLV) are hinge 1. 8 Filamin repeats span residues 1779 to 1860 (GVNG…QFYV), 1861 to 1950 (DYVN…PFTA), 1951 to 2039 (RVTG…PVVI), 2042 to 2131 (SEIG…SPFS), 2132 to 2230 (VKVT…QFTV), 2233 to 2325 (LGEG…VVPV), 2327 to 2420 (SPSG…KIRV), and 2424 to 2516 (GHGG…KAKV). Position 1835 is a phosphoserine (Ser-1835). Residues Ser-1967, Ser-2053, Ser-2128, Ser-2152, Ser-2158, Ser-2163, Ser-2180, Ser-2284, Ser-2327, and Ser-2329 each carry the phosphoserine modification. Thr-2336 is modified (phosphothreonine). Ser-2338, Ser-2370, Ser-2414, Ser-2510, Ser-2523, and Ser-2526 each carry phosphoserine. The segment at 2517 to 2551 (TGPRLVSNHSLHETSSVFVDSLTKATCAPQHGAPG) is hinge 2. The segment at 2517–2647 (TGPRLVSNHS…PGSPYRVVVP (131 aa)) is self-association site, tail. A Filamin 24 repeat occupies 2552–2646 (PGPADASKVV…IPGSPYRVVV (95 aa)). An N6-acetyllysine; alternate modification is found at Lys-2569. Lys-2569 is subject to N6-succinyllysine; alternate. Lys-2575 carries the N6-acetyllysine modification. Thr-2599 bears the Phosphothreonine mark. 2 positions are modified to N6-acetyllysine: Lys-2607 and Lys-2621.

It belongs to the filamin family. In terms of assembly, homodimer. Interacts with PDLIM2. Interacts with RFLNA and RFLNB. Interacts with FCGR1A, FLNB, FURIN, HSPB7, INPPL1, KCND2, MYOT, MYOZ1, ARHGAP24, PSEN1, PSEN2 and ECSCR. Also interacts with various other binding partners in addition to filamentous actin. Interacts (via N-terminus) with MIS18BP1 (via N-terminus). Interacts (via N-terminus) with TAF1B. Interacts with TMEM67 (via C-terminus) and MKS1. Interacts (via actin-binding domain) with MICALL2 (via CH domain). Interacts (via filamin repeat 5) with SYK; docks SYK to the plasma membrane. Interacts (via filamin repeats 19 and 21) with DRD3; increased PKA-mediated phosphorylation at Ser-2152. Interacts (via filamin repeat 21) with MAS1, AGTR1 and ADRA1D; increases PKA-mediated phosphorylation of FLNA at Ser-2152. Interacts (via filamin repeats 4, 9, 12, 17, 19, 21, and 23) with GP1BA (high affinity), ITGB7, ITGB2 and FBLIM1. Interacts with CEACAM1 (via cytoplasmic domain); inhibits cell migration and cell scattering by interfering with the interaction between FLNA and RALA. Interacts with FOXC1. Interacts (via calponin-homology (CH) domain 1 and filamin repeat 24) with CRMP1; the interaction alters FLNA ternary structure and thus promotes FLNA dissociation from F-actin. Interacts with DPYSL3/CRMP3 and DPYSL4/CRMP4. Interacts with integrin ITGB1 isoform 1/beta-1A and isoform 5/beta-1D. Interacts with LUZP1; the interaction is not necessary for colocalization of LUZP1 with F-actin. Post-translationally, phosphorylation at Ser-2152 is negatively regulated by the autoinhibited conformation of filamin repeats 19-21. Ligand binding induces a conformational switch triggering phosphorylation at Ser-2152 by PKA. In terms of processing, phosphorylation extent changes in response to cell activation. Polyubiquitination in the CH1 domain by a SCF-like complex containing ASB2 leads to proteasomal degradation. Prior dissociation from actin may be required to expose the target lysines. Ubiquitinated in endothelial cells by RNF213 downstream of the non-canonical Wnt signaling pathway, leading to its degradation by the proteasome. As to expression, ubiquitous.

It is found in the cytoplasm. The protein resides in the cell cortex. Its subcellular location is the cytoskeleton. It localises to the perikaryon. The protein localises to the cell projection. It is found in the growth cone. The protein resides in the podosome. In terms of biological role, promotes orthogonal branching of actin filaments and links actin filaments to membrane glycoproteins. Anchors various transmembrane proteins to the actin cytoskeleton and serves as a scaffold for a wide range of cytoplasmic signaling proteins. Interaction with FLNB may allow neuroblast migration from the ventricular zone into the cortical plate. Tethers cell surface-localized furin, modulates its rate of internalization and directs its intracellular trafficking. Involved in ciliogenesis. Plays a role in cell-cell contacts and adherens junctions during the development of blood vessels, heart and brain organs. Plays a role in platelets morphology through interaction with SYK that regulates ITAM- and ITAM-like-containing receptor signaling, resulting in by platelet cytoskeleton organization maintenance. During the axon guidance process, required for growth cone collapse induced by SEMA3A-mediated stimulation of neurons. The sequence is that of Filamin-A (FLNA) from Homo sapiens (Human).